A 319-amino-acid chain; its full sequence is GTP 3',8-cyclase (319 aa).

The Radical SAM core domain maps to 4 to 219 (KHGRKINYLR…SKHSDLIPVE (216 aa)). Residue Arg13 coordinates GTP. [4Fe-4S] cluster is bound by residues Cys20 and Cys24. Tyr26 provides a ligand contact to S-adenosyl-L-methionine. Residue Cys27 participates in [4Fe-4S] cluster binding. GTP is bound at residue Arg63. Gly67 is an S-adenosyl-L-methionine binding site. Thr94 contributes to the GTP binding site. Residue Ser118 participates in S-adenosyl-L-methionine binding. Residue Lys155 coordinates GTP. Met189 is a binding site for S-adenosyl-L-methionine. The [4Fe-4S] cluster site is built by Cys249 and Cys252. 254–256 (RVR) serves as a coordination point for GTP. A [4Fe-4S] cluster-binding site is contributed by Cys266.

Belongs to the radical SAM superfamily. MoaA family. As to quaternary structure, monomer and homodimer. The cofactor is [4Fe-4S] cluster.

The enzyme catalyses GTP + AH2 + S-adenosyl-L-methionine = (8S)-3',8-cyclo-7,8-dihydroguanosine 5'-triphosphate + 5'-deoxyadenosine + L-methionine + A + H(+). Its pathway is cofactor biosynthesis; molybdopterin biosynthesis. Functionally, catalyzes the cyclization of GTP to (8S)-3',8-cyclo-7,8-dihydroguanosine 5'-triphosphate. This is GTP 3',8-cyclase from Clostridium botulinum (strain Okra / Type B1).